The primary structure comprises 94 residues: Large ribosomal subunit protein bL31 (94 aa).

The interval 64–94 (KYGMANPDEDSTKNTKSSKKETSEDSSSKGS) is disordered. Residues 73-94 (DSTKNTKSSKKETSEDSSSKGS) are compositionally biased toward basic and acidic residues.

The protein belongs to the bacterial ribosomal protein bL31 family. Type A subfamily. In terms of assembly, part of the 50S ribosomal subunit.

Binds the 23S rRNA. The sequence is that of Large ribosomal subunit protein bL31 from Prochlorococcus marinus (strain SARG / CCMP1375 / SS120).